The sequence spans 283 residues: Elongation factor Ts (283 aa).

The interval 80–83 (TDFV) is involved in Mg(2+) ion dislocation from EF-Tu.

Belongs to the EF-Ts family.

It localises to the cytoplasm. Associates with the EF-Tu.GDP complex and induces the exchange of GDP to GTP. It remains bound to the aminoacyl-tRNA.EF-Tu.GTP complex up to the GTP hydrolysis stage on the ribosome. The polypeptide is Elongation factor Ts (Salmonella gallinarum (strain 287/91 / NCTC 13346)).